A 472-amino-acid polypeptide reads, in one-letter code: Trigger factor (472 aa).

A PPIase FKBP-type domain is found at 172 to 257; it reads GDEVRFDFKG…IKEITSVKPQ (86 aa). Polar residues-rich tracts occupy residues 439 to 449 and 461 to 472; these read NQPKDTASTLS and KTSNTKKVASKK. Residues 439-472 are disordered; the sequence is NQPKDTASTLSKQEDKPKVAKAKTSNTKKVASKK.

Belongs to the FKBP-type PPIase family. Tig subfamily.

The protein localises to the cytoplasm. The catalysed reaction is [protein]-peptidylproline (omega=180) = [protein]-peptidylproline (omega=0). Its function is as follows. Involved in protein export. Acts as a chaperone by maintaining the newly synthesized protein in an open conformation. Functions as a peptidyl-prolyl cis-trans isomerase. The polypeptide is Trigger factor (Ureaplasma urealyticum serovar 10 (strain ATCC 33699 / Western)).